The sequence spans 323 residues: Ribosomal RNA small subunit methyltransferase H (323 aa).

S-adenosyl-L-methionine contacts are provided by residues 39–41, Asp57, Phe84, Asp103, and Gln110; that span reads GGY.

This sequence belongs to the methyltransferase superfamily. RsmH family.

It is found in the cytoplasm. The catalysed reaction is cytidine(1402) in 16S rRNA + S-adenosyl-L-methionine = N(4)-methylcytidine(1402) in 16S rRNA + S-adenosyl-L-homocysteine + H(+). In terms of biological role, specifically methylates the N4 position of cytidine in position 1402 (C1402) of 16S rRNA. The protein is Ribosomal RNA small subunit methyltransferase H of Gluconobacter oxydans (strain 621H) (Gluconobacter suboxydans).